Consider the following 272-residue polypeptide: Tryptophan synthase alpha chain (272 aa).

Catalysis depends on proton acceptor residues Glu60 and Asp71.

Belongs to the TrpA family. In terms of assembly, tetramer of two alpha and two beta chains.

The catalysed reaction is (1S,2R)-1-C-(indol-3-yl)glycerol 3-phosphate + L-serine = D-glyceraldehyde 3-phosphate + L-tryptophan + H2O. The protein operates within amino-acid biosynthesis; L-tryptophan biosynthesis; L-tryptophan from chorismate: step 5/5. Its function is as follows. The alpha subunit is responsible for the aldol cleavage of indoleglycerol phosphate to indole and glyceraldehyde 3-phosphate. The polypeptide is Tryptophan synthase alpha chain (Methanosarcina acetivorans (strain ATCC 35395 / DSM 2834 / JCM 12185 / C2A)).